Consider the following 249-residue polypeptide: MVDIKPEQTQEGNNNDHLVQSDDPEHPANLIPELCRKFYSLGWVTGTGGGTSIRRGEHIFIAPSGVQKELIKPNEIFVLSYPTPKYPPSARKYIRKPSALNPSACTPLFLAAFDRGAGCCIHTHSQWAVMVTLLVEREKGKSGCFEISNIEQIKGIPRGKGKGMLGFFDTLKIPIIENTAFEEDLTESLEKAMEEYPDTYAVLVRRHGIYVWGDTPAKAKTQCESLDYLFQLAVQMHAHSLPWVVNESA.

The interval 1 to 25 is disordered; sequence MVDIKPEQTQEGNNNDHLVQSDDPE. A compositionally biased stretch (polar residues) spans 9–18; it reads TQEGNNNDHL. C105 contributes to the substrate binding site. H122 and H124 together coordinate Zn(2+). E151 serves as the catalytic Proton donor/acceptor. A Zn(2+)-binding site is contributed by H207.

Belongs to the aldolase class II family. MtnB subfamily. The cofactor is Zn(2+).

Its subcellular location is the cytoplasm. It catalyses the reaction 5-(methylsulfanyl)-D-ribulose 1-phosphate = 5-methylsulfanyl-2,3-dioxopentyl phosphate + H2O. It participates in amino-acid biosynthesis; L-methionine biosynthesis via salvage pathway; L-methionine from S-methyl-5-thio-alpha-D-ribose 1-phosphate: step 2/6. Functionally, catalyzes the dehydration of methylthioribulose-1-phosphate (MTRu-1-P) into 2,3-diketo-5-methylthiopentyl-1-phosphate (DK-MTP-1-P). This Arthroderma otae (strain ATCC MYA-4605 / CBS 113480) (Microsporum canis) protein is Methylthioribulose-1-phosphate dehydratase.